The following is a 119-amino-acid chain: Beta-2-microglobulin (119 aa).

The signal sequence occupies residues 1 to 20 (MARSVAVVFLMLLSVVCLDA). Residues 25–114 (PQVQVYTRHP…TTLKEPKVVT (90 aa)) enclose the Ig-like C1-type domain. A disulfide bridge links Cys-45 with Cys-100.

This sequence belongs to the beta-2-microglobulin family. As to quaternary structure, heterodimer of an alpha chain and a beta chain. Beta-2-microglobulin is the beta-chain of major histocompatibility complex class I molecules.

Its subcellular location is the secreted. Its function is as follows. Component of the class I major histocompatibility complex (MHC). Involved in the presentation of peptide antigens to the immune system. This chain is Beta-2-microglobulin (B2M), found in Cricetulus griseus (Chinese hamster).